The chain runs to 30 residues: U-actitoxin-Bcg2a (30 aa).

Residues Cys7 and Cys27 are joined by a disulfide bond.

The protein resides in the secreted. Its subcellular location is the nematocyst. Its function is as follows. Possible voltage-gated potassium channel (Kv) blocker. This Bunodosoma cangicum (Sea anemone) protein is U-actitoxin-Bcg2a.